We begin with the raw amino-acid sequence, 304 residues long: MAKHSPQELASVLKDGLLSFPVTSFDSQLQFDEENYRKHLAWQASYPVAGLFAAGGTGEGFSLTPAESARVVRAAVEEVGSTVPVLASAGGSTAQAIENAQAAEAAGAEGILLLPPYLTEADQGGLIEHVSAVCSATSLGVIIYNRANAIYKDTTVAALADRHESLIGFKDGVGDLEHDARVYAKLGDRLFYLGGLPTAETFALPLLQLGMSTYSSAMYNFVPQFALDFYQDVRNHDRVAVNKKLNDFVIPYLDIRDRVKGYSVSIVKGGLDAIGRSAGGVRPPLQNLAPQDLADLKALIATVS.

This sequence belongs to the DapA family.

It carries out the reaction 5-dehydro-4-deoxy-D-glucarate + H(+) = 2,5-dioxopentanoate + CO2 + H2O. It participates in carbohydrate acid metabolism; D-glucarate degradation; 2,5-dioxopentanoate from D-glucarate: step 2/2. This chain is Probable 5-dehydro-4-deoxyglucarate dehydratase, found in Arthrobacter sp. (strain FB24).